Consider the following 76-residue polypeptide: Attractin (76 aa).

Residues 1-18 (MKVAIIILSLALVAAVFA) form the signal peptide. 3 disulfide bridges follow: Cys22/Cys59, Cys31/Cys51, and Cys38/Cys44. N-linked (GlcNAc...) asparagine glycosylation is present at Asn26.

In terms of assembly, binds to temptin and enticin. As to expression, produced by the albumen gland of the egg cordons.

It localises to the secreted. Water-borne pheromone that attract the marine mollusk Aplysia into breeding aggregations and coordinate male and female reproductive behavior within the aggregation. This Aplysia californica (California sea hare) protein is Attractin (ATT).